A 293-amino-acid chain; its full sequence is Acetyl-coenzyme A carboxylase carboxyl transferase subunit beta (293 aa).

One can recognise a CoA carboxyltransferase N-terminal domain in the interval 29-293; the sequence is LWRKCPRCEG…MGWPPLALDD (265 aa). Cys-33, Cys-36, Cys-52, and Cys-55 together coordinate Zn(2+). Residues 33 to 55 form a C4-type zinc finger; the sequence is CPRCEGVVYRPELDRNMDVCPKC.

The protein belongs to the AccD/PCCB family. In terms of assembly, acetyl-CoA carboxylase is a heterohexamer composed of biotin carboxyl carrier protein (AccB), biotin carboxylase (AccC) and two subunits each of ACCase subunit alpha (AccA) and ACCase subunit beta (AccD). Zn(2+) is required as a cofactor.

The protein resides in the cytoplasm. It carries out the reaction N(6)-carboxybiotinyl-L-lysyl-[protein] + acetyl-CoA = N(6)-biotinyl-L-lysyl-[protein] + malonyl-CoA. Its pathway is lipid metabolism; malonyl-CoA biosynthesis; malonyl-CoA from acetyl-CoA: step 1/1. Component of the acetyl coenzyme A carboxylase (ACC) complex. Biotin carboxylase (BC) catalyzes the carboxylation of biotin on its carrier protein (BCCP) and then the CO(2) group is transferred by the transcarboxylase to acetyl-CoA to form malonyl-CoA. This chain is Acetyl-coenzyme A carboxylase carboxyl transferase subunit beta, found in Alcanivorax borkumensis (strain ATCC 700651 / DSM 11573 / NCIMB 13689 / SK2).